A 460-amino-acid chain; its full sequence is Cysteine--tRNA ligase (460 aa).

C27 is a binding site for Zn(2+). The 'HIGH' region signature appears at 29–39 (PTVYDLIHVGN). Residues C207, H232, and E236 each contribute to the Zn(2+) site. The short motif at 264 to 268 (KMSKS) is the 'KMSKS' region element. An ATP-binding site is contributed by K267.

Belongs to the class-I aminoacyl-tRNA synthetase family. In terms of assembly, monomer. Zn(2+) is required as a cofactor.

It is found in the cytoplasm. It catalyses the reaction tRNA(Cys) + L-cysteine + ATP = L-cysteinyl-tRNA(Cys) + AMP + diphosphate. The polypeptide is Cysteine--tRNA ligase (Thermotoga petrophila (strain ATCC BAA-488 / DSM 13995 / JCM 10881 / RKU-1)).